The following is a 499-amino-acid chain: Lysine--tRNA ligase (499 aa).

Residues glutamate 408 and glutamate 415 each contribute to the Mg(2+) site.

This sequence belongs to the class-II aminoacyl-tRNA synthetase family. As to quaternary structure, homodimer. The cofactor is Mg(2+).

It localises to the cytoplasm. The catalysed reaction is tRNA(Lys) + L-lysine + ATP = L-lysyl-tRNA(Lys) + AMP + diphosphate. This is Lysine--tRNA ligase from Bacillus cereus (strain G9842).